The sequence spans 613 residues: Methionine--tRNA ligase (613 aa).

The 'HIGH' region motif lies at 15–25 (PYANGPRHIGH). The Zn(2+) site is built by Cys-147, Cys-150, Cys-160, and Cys-163. Residues 351–355 (KFSSS) carry the 'KMSKS' region motif. Position 354 (Ser-354) interacts with ATP.

This sequence belongs to the class-I aminoacyl-tRNA synthetase family. MetG type 1 subfamily. Monomer. It depends on Zn(2+) as a cofactor.

It localises to the cytoplasm. It carries out the reaction tRNA(Met) + L-methionine + ATP = L-methionyl-tRNA(Met) + AMP + diphosphate. Functionally, is required not only for elongation of protein synthesis but also for the initiation of all mRNA translation through initiator tRNA(fMet) aminoacylation. This chain is Methionine--tRNA ligase, found in Corynebacterium efficiens (strain DSM 44549 / YS-314 / AJ 12310 / JCM 11189 / NBRC 100395).